A 315-amino-acid chain; its full sequence is Transcriptional regulator protein Pur-beta (315 aa).

The disordered stretch occupies residues 1 to 39 (MADGDSGSERGGGGPGSFQPAPRGGGGPGGEQETQELAS). Ala-2 carries the post-translational modification N-acetylalanine. A phosphoserine mark is found at Ser-6 and Ser-8. Omega-N-methylarginine is present on Arg-23. Residues 28–254 (PGGEQETQEL…GVFLRVSEVK (227 aa)) form a DNA-binding region. Thr-34 carries the phosphothreonine modification. Ser-104 bears the Phosphoserine mark. At Arg-155 the chain carries Omega-N-methylarginine. A disordered region spans residues 200–220 (DDELAGGPGGGAGGPGGGLYG). Positions 205–219 (GGPGGGAGGPGGGLY) are enriched in gly residues. Lys-270 carries the N6-acetyllysine modification. The segment covering 288-298 (RQRDKLYERRG) has biased composition (basic and acidic residues). The tract at residues 288–315 (RQRDKLYERRGGGSGGGDESEGEEVDED) is disordered. Arg-297 is subject to Omega-N-methylarginine. Phosphoserine occurs at positions 301 and 307. The segment covering 305–315 (DESEGEEVDED) has biased composition (acidic residues).

This sequence belongs to the PUR DNA-binding protein family. As to quaternary structure, homodimer, heterodimer with PURA and heterotrimer with PURA and YBX1/Y-box protein 1. Interacts with MYOCD and SRF. In terms of tissue distribution, expressed in muscle cells and in the liver.

Its subcellular location is the nucleus. In terms of biological role, transcriptional regulator which can act as an activator or a repressor. Represses the transcription of ACTA2 in fibroblasts and smooth muscle cells via its ability to interact with the purine-rich strand of a MCAT- containing element in the 5' flanking region of the gene. Represses the transcription of MYOCD, capable of repressing all isoforms of MYOCD but the magnitude of the repressive effects is most notable for the SMC- specific isoforms. Promotes hepatic glucose production by activating the transcription of ADCY6, leading to cAMP accumulation, increased PKA activity, CREB activation, and increased transcription of PCK1 and G6PC genes. Has capacity to bind repeated elements in single-stranded DNA such as the purine-rich single strand of the PUR element located upstream of the MYC gene. Participates in transcriptional and translational regulation of alpha-MHC expression in cardiac myocytes by binding to the purine-rich negative regulatory (PNR) element. Modulates constitutive liver galectin-3 gene transcription by binding to its promoter. May play a role in the dendritic transport of a subset of mRNAs. The sequence is that of Transcriptional regulator protein Pur-beta (Purb) from Rattus norvegicus (Rat).